A 194-amino-acid chain; its full sequence is Extracellular globin-E1 (194 aa).

2 consecutive Globin domains span residues Asp-1 to Ser-45 and Gly-55 to Ala-194. His-150 lines the heme b pocket.

The protein belongs to the globin family. In terms of assembly, artemia hemoglobin is a dimer of two similar sized subunits. Each subunit represents a globin chain which exists in two forms (alpha and beta), thus making possible three different phenotypes (HB1, alpha(2), HB2, alpha/beta, HB3, beta(2)). The globin chain is a polymer of eight heme-binding covalently linked domains.

This is Extracellular globin-E1 from Artemia sp. (Brine shrimp).